The chain runs to 2958 residues: Protein CSF1 (2958 aa).

The Cytoplasmic segment spans residues 1–17 (MEAISQLRGVPLTHQKD). The chain crosses the membrane as a helical; Signal-anchor for type II membrane protein span at residues 18 to 38 (FSWVFLVDWILTVVVCLTMIF). At 39-2958 (YMGRIYAYLV…QYVKILDDTH (2920 aa)) the chain is on the extracellular side. N82, N117, N144, N271, N478, N530, N816, N821, N839, and N892 each carry an N-linked (GlcNAc...) asparagine glycan. Positions 813 to 834 (GYQNSSLKNESEDKGPMKRSDL) are disordered. Basic and acidic residues predominate over residues 821-834 (NESEDKGPMKRSDL). The segment at 1175-1196 (MEPSRASFSEDDNDEEADPSSF) is disordered. A compositionally biased stretch (acidic residues) spans 1183-1192 (SEDDNDEEAD). N1309, N1368, N1453, N1785, N1921, N2130, N2146, N2280, N2337, N2520, N2578, N2719, and N2869 each carry an N-linked (GlcNAc...) asparagine glycan.

This sequence belongs to the CSF1 family. In terms of assembly, interacts with MCD4; CSF1 channels phosphatidylethanolamine to MCD4 in the endoplasmic reticulum at contact sites to support GPI anchor biosynthesis.

The protein localises to the cell membrane. It localises to the endoplasmic reticulum membrane. It is found in the mitochondrion membrane. Tube-forming lipid transport protein which provides phosphatidylethanolamine for glycosylphosphatidylinositol (GPI) anchor synthesis in the endoplasmic reticulum. Required for the glucose and other nutrients uptake at low temperature. The chain is Protein CSF1 from Saccharomyces cerevisiae (strain ATCC 204508 / S288c) (Baker's yeast).